We begin with the raw amino-acid sequence, 396 residues long: Chalcone synthase B (396 aa).

The active site involves C170.

The protein belongs to the thiolase-like superfamily. Chalcone/stilbene synthases family.

It catalyses the reaction (E)-4-coumaroyl-CoA + 3 malonyl-CoA + 3 H(+) = 2',4,4',6'-tetrahydroxychalcone + 3 CO2 + 4 CoA. Its pathway is secondary metabolite biosynthesis; flavonoid biosynthesis. The primary product of this enzyme is 4,2',4',6'-tetrahydroxychalcone (also termed naringenin-chalcone or chalcone) which can under specific conditions spontaneously isomerize into naringenin. This Ipomoea purpurea (Common morning glory) protein is Chalcone synthase B (CHSB).